A 316-amino-acid chain; its full sequence is tRNA dimethylallyltransferase (316 aa).

17 to 24 is a binding site for ATP; sequence GPTASGKT. 19-24 provides a ligand contact to substrate; that stretch reads TASGKT. Interaction with substrate tRNA regions lie at residues 42–45, 166–170, and 247–252; these read DSAL, QRLSR, and RCVGYR.

It belongs to the IPP transferase family. As to quaternary structure, monomer. The cofactor is Mg(2+).

The catalysed reaction is adenosine(37) in tRNA + dimethylallyl diphosphate = N(6)-dimethylallyladenosine(37) in tRNA + diphosphate. Functionally, catalyzes the transfer of a dimethylallyl group onto the adenine at position 37 in tRNAs that read codons beginning with uridine, leading to the formation of N6-(dimethylallyl)adenosine (i(6)A). This Salmonella arizonae (strain ATCC BAA-731 / CDC346-86 / RSK2980) protein is tRNA dimethylallyltransferase.